The primary structure comprises 179 residues: Coiled-coil domain-containing protein 32 (179 aa).

Positions 75-98 (EVYLASLEKKLRRIKGLNEEVTSK) form a coiled coil. Residues 157-179 (FLIPPESQAEKPEARDEPAAAEQ) are disordered. A compositionally biased stretch (basic and acidic residues) spans 164 to 179 (QAEKPEARDEPAAAEQ).

As to quaternary structure, interacts with AP2S1; the interaction is direct and mediates association with adaptor protein complex 2 (AP-2).

Its subcellular location is the membrane. The protein resides in the coated pit. Its function is as follows. Regulates clathrin-mediated endocytsois of cargos such as transferrin probably through the association and modulation of adaptor protein complex 2 (AP-2). Has a role in ciliogenesis. Required for proper cephalic and left/right axis development. This chain is Coiled-coil domain-containing protein 32 (Ccdc32), found in Rattus norvegicus (Rat).